We begin with the raw amino-acid sequence, 104 residues long: Large ribosomal subunit protein uL24 (104 aa).

This sequence belongs to the universal ribosomal protein uL24 family. As to quaternary structure, part of the 50S ribosomal subunit.

In terms of biological role, one of two assembly initiator proteins, it binds directly to the 5'-end of the 23S rRNA, where it nucleates assembly of the 50S subunit. One of the proteins that surrounds the polypeptide exit tunnel on the outside of the subunit. This Bartonella quintana (strain Toulouse) (Rochalimaea quintana) protein is Large ribosomal subunit protein uL24.